The primary structure comprises 250 residues: uncharacterized protein (250 aa).

The stretch at 165–208 (HLNLETANTKATEYQKNYQEELKQRQELRQKLLQERTQKMLEAL) forms a coiled coil. The span at 201–233 (TQKMLEALHQEETPEQDARDTAKKKTDQEEHTM) shows a compositional bias: basic and acidic residues. Residues 201 to 250 (TQKMLEALHQEETPEQDARDTAKKKTDQEEHTMRKANAPKTKASGEAPTP) form a disordered region.

This is an uncharacterized protein from Treponema pallidum (strain Nichols).